The following is a 326-amino-acid chain: Putative HTH-type transcriptional regulatory protein MmarC7_1702 (326 aa).

The 56-residue stretch at Leu128 to Ile183 folds into the HTH cro/C1-type domain. A DNA-binding region (H-T-H motif) is located at residues Val139–Gln158.

In Methanococcus maripaludis (strain C7 / ATCC BAA-1331), this protein is Putative HTH-type transcriptional regulatory protein MmarC7_1702.